Reading from the N-terminus, the 169-residue chain is Myosin regulatory light chain 11 (169 aa).

Alanine 2 carries the n,N,N-trimethylalanine modification. Phosphoserine occurs at positions 15 and 16. Residues threonine 25 and threonine 35 each carry the phosphothreonine modification. Residues threonine 25 to leucine 60 enclose the EF-hand 1 domain. The Ca(2+) site is built by aspartate 38, asparagine 40, aspartate 42, and aspartate 49. Serine 75 carries the post-translational modification Phosphoserine. EF-hand domains are found at residues aspartate 95–arginine 130 and phenylalanine 131–lysine 166. Threonine 101 carries the post-translational modification Phosphothreonine.

As to quaternary structure, myosin is a hexamer of 2 heavy chains and 4 light chains.

Its function is as follows. Myosin regulatory subunit that plays an essential role to maintain muscle integrity during early development. Plays a role in regulation of muscle contraction. The sequence is that of Myosin regulatory light chain 11 (Myl11) from Mus musculus (Mouse).